The sequence spans 256 residues: Thiazole synthase (256 aa).

Residue Lys95 is the Schiff-base intermediate with DXP of the active site. Residues Gly156, 182 to 183 (AG), and 204 to 205 (NT) contribute to the 1-deoxy-D-xylulose 5-phosphate site.

Belongs to the ThiG family. Homotetramer. Forms heterodimers with either ThiH or ThiS.

The protein resides in the cytoplasm. It catalyses the reaction [ThiS sulfur-carrier protein]-C-terminal-Gly-aminoethanethioate + 2-iminoacetate + 1-deoxy-D-xylulose 5-phosphate = [ThiS sulfur-carrier protein]-C-terminal Gly-Gly + 2-[(2R,5Z)-2-carboxy-4-methylthiazol-5(2H)-ylidene]ethyl phosphate + 2 H2O + H(+). Its pathway is cofactor biosynthesis; thiamine diphosphate biosynthesis. Its function is as follows. Catalyzes the rearrangement of 1-deoxy-D-xylulose 5-phosphate (DXP) to produce the thiazole phosphate moiety of thiamine. Sulfur is provided by the thiocarboxylate moiety of the carrier protein ThiS. In vitro, sulfur can be provided by H(2)S. The chain is Thiazole synthase from Cronobacter sakazakii (strain ATCC BAA-894) (Enterobacter sakazakii).